We begin with the raw amino-acid sequence, 493 residues long: Neisserial heparin binding antigen (493 aa).

The N-terminal stretch at 1–22 (MKEMMMFKRSVIAMACIFALSA) is a signal peptide. A lipid anchor (N-palmitoyl cysteine) is attached at cysteine 23. Cysteine 23 is lipidated: S-diacylglycerol cysteine. The tract at residues 27-206 (GGGSPDVKSA…NPAPANGGSN (180 aa)) is disordered. A compositionally biased stretch (basic and acidic residues) spans 48-58 (SEKETEAKEDA). The span at 59–75 (PQAGSQGQGAPSAQGSQ) shows a compositional bias: low complexity. Polar residues-rich tracts occupy residues 106 to 123 (DMPQNAAGTDSSTPNHTP) and 132 to 147 (MENQATDAGESSQPAN). A compositionally biased stretch (low complexity) spans 165–188 (AGGQNAGNTAAQGANQAGNNQAAG). The Arg-rich motif motif lies at 301–311 (RFRRSARSRRS).

This sequence belongs to the NHBA family. As to quaternary structure, the C-terminal beta-barrel forms a monomer. In terms of processing, cleaved in vivo by the Neisserial phase-variable autotransporter/serine protease NalP to give 2 fragments. The N-terminus remains in the cell outer membrane while the C-terminus (beginning on Ser-298) is soluble; this soluble fragment is called C2. Cleaved in vitro by human lactoferrin (LTF, between Arg-310 and Ser-311), this fragment is called C1. Recombinant and cell surface protein is cleaved by human saliva kallikrein (KLK1) between Ser-308 and Arg-309; in saliva kallikrein is more active on NHBA than lactoferrin. Human plasma kallikrein (KLKB1) cleaves in a similar manner to KLK1.

It localises to the cell outer membrane. Functionally, a major human immunogenic protein detected in patients recovering from meningitidis, where it induces bactericidal antibodies. Binds human cells, heparin and heparan sulfate proteoglycan in vitro via the Arg-rich motif. Heparin-binding to this protein protects bacteria against killing by bactericidal antibodies (serum killing). The bacteria binds a number of human extracellular sialyated and/or sulfated glycans via this protein, including chondroitin sulfate, heparin and ganglioside GT3. Whole protein binds DNA. In terms of biological role, plays a role in extracellular-DNA (eDNA) mediated biofilm formation. In some strains (including cc32 strain H44/76 but not cc11 strain B16B6) eDNA stimulates biofilm formation. When NHBA is not processed by NalP, biofilm formation increases. This is probably because the number of positively charged, NHBA- and IgA-derived DNA-binding peptides on the cell surface rises, resulting in increased DNA-binding peptides and increased biofilm formation. This is Neisserial heparin binding antigen from Neisseria meningitidis serogroup B / serotype 15 (strain H44/76).